Here is a 369-residue protein sequence, read N- to C-terminus: Phosphate acyltransferase (369 aa).

Belongs to the PlsX family. In terms of assembly, homodimer. Probably interacts with PlsY.

It localises to the cytoplasm. The catalysed reaction is a fatty acyl-[ACP] + phosphate = an acyl phosphate + holo-[ACP]. It participates in lipid metabolism; phospholipid metabolism. Its function is as follows. Catalyzes the reversible formation of acyl-phosphate (acyl-PO(4)) from acyl-[acyl-carrier-protein] (acyl-ACP). This enzyme utilizes acyl-ACP as fatty acyl donor, but not acyl-CoA. This Gluconobacter oxydans (strain 621H) (Gluconobacter suboxydans) protein is Phosphate acyltransferase.